Here is a 500-residue protein sequence, read N- to C-terminus: ATP synthase subunit alpha (500 aa).

169–176 is an ATP binding site; that stretch reads GDRQTGKT.

The protein belongs to the ATPase alpha/beta chains family. As to quaternary structure, F-type ATPases have 2 components, CF(1) - the catalytic core - and CF(0) - the membrane proton channel. CF(1) has five subunits: alpha(3), beta(3), gamma(1), delta(1), epsilon(1). CF(0) has three main subunits: a(1), b(2) and c(9-12). The alpha and beta chains form an alternating ring which encloses part of the gamma chain. CF(1) is attached to CF(0) by a central stalk formed by the gamma and epsilon chains, while a peripheral stalk is formed by the delta and b chains.

Its subcellular location is the cell membrane. It catalyses the reaction ATP + H2O + 4 H(+)(in) = ADP + phosphate + 5 H(+)(out). Its function is as follows. Produces ATP from ADP in the presence of a proton gradient across the membrane. The alpha chain is a regulatory subunit. This Lactococcus lactis subsp. cremoris (strain MG1363) protein is ATP synthase subunit alpha.